Reading from the N-terminus, the 1885-residue chain is Chitin synthase 5 (1885 aa).

The Myosin motor domain occupies 1–789 (MATRGNVPAH…SIALTGSQAA (789 aa)). Residue 99-106 (GESGSGKT) participates in ATP binding. N-linked (GlcNAc...) asparagine glycosylation is found at Asn219 and Asn429. A disordered region spans residues 601–649 (KPLRMPSVSRKKHDQLRRMASRRADRSPAPQEEEPLPGTEEAKVRRTKP). The segment covering 609-621 (SRKKHDQLRRMAS) has biased composition (basic residues). An actin-binding region spans residues 666 to 690 (LDNITKSLTAPNVNNYFVFCLKPND). N-linked (GlcNAc...) asparagine glycosylation is present at Asn668. The tract at residues 794 to 817 (GDIGSPSRPDTPGHNPFSDSKARL) is disordered. Helical transmembrane passes span 894-914 (WLAIVYFLTWYLPDFAIKWIG) and 929-949 (FAINLLIWLSCGLVVFFIIVF). One can recognise a Cytochrome b5 heme-binding domain in the interval 957–1016 (QNVYSAAELSAHDGKGKHSAYVAIRGQVFDLGAFMPNHYPKIIPQSSLKKYAGVDATGLF). Residues Asn1043 and Asn1068 are each glycosylated (N-linked (GlcNAc...) asparagine). Residues 1205 to 1225 (ILLAVSILLCSVIGFKFFAAL) form a helical membrane-spanning segment. 2 N-linked (GlcNAc...) asparagine glycosylation sites follow: Asn1462 and Asn1568. Helical transmembrane passes span 1599–1619 (LLSTVVAPVTVAYIAYLIVLL), 1626–1646 (VPLTAFILLGAIYGLQAIIFI), and 1653–1673 (MIGWMIVYILAMPVFSLGLPL). N-linked (GlcNAc...) asparagine glycans are attached at residues Asn1759 and Asn1790. One can recognise a DEK-C domain in the interval 1827–1882 (LPTDDMLLNEIRDILRTADLMTVTKKGIKQELERRFNVNLDMKRAYIGSATEAILS).

In the N-terminal section; belongs to the TRAFAC class myosin-kinesin ATPase superfamily. Myosin family. The protein in the C-terminal section; belongs to the chitin synthase family. Class V subfamily. Post-translationally, maximal activity requires trypsin activation, suggesting a zymogenic nature.

It is found in the cell membrane. It localises to the membrane. The catalysed reaction is [(1-&gt;4)-N-acetyl-beta-D-glucosaminyl](n) + UDP-N-acetyl-alpha-D-glucosamine = [(1-&gt;4)-N-acetyl-beta-D-glucosaminyl](n+1) + UDP + H(+). Its function is as follows. Polymerizes chitin, a structural polymer of the cell wall and septum, by transferring the sugar moiety of UDP-GlcNAc to the non-reducing end of the growing chitin polymer. CHS5 is required for the sustained growth at 37 degrees Celsius and is of critical importance for virulence. Especially important at infection temperatures for maintaining the cell wall integrity of developing yeast buds, elongating tips of hyphae, and random sites of expansion in sclerotic forms. The polypeptide is Chitin synthase 5 (Exophiala dermatitidis (Black yeast-like fungus)).